The primary structure comprises 314 residues: Small ribosomal subunit protein uS2 (314 aa).

Basic and acidic residues-rich tracts occupy residues 244–265 and 271–287; these read GGHDERREQEDRDAASERGHKD and DRRGGPRERREPREDRA. The interval 244 to 314 is disordered; sequence GGHDERREQE…AAPEAAPAKE (71 aa). Positions 302–314 are enriched in low complexity; that stretch reads APAAAPEAAPAKE.

Belongs to the universal ribosomal protein uS2 family.

The protein is Small ribosomal subunit protein uS2 of Anaeromyxobacter dehalogenans (strain 2CP-C).